The primary structure comprises 406 residues: Lysophospholipid transporter LplT (406 aa).

The next 11 helical transmembrane spans lie at 16–36, 53–73, 91–111, 139–159, 164–184, 227–247, 253–273, 285–305, 310–330, 349–369, and 372–392; these read MVAVLCAQFFSAFGDNALLFA, ILQMAFVATYIVLAPFVGQIA, AGALVICFGLNPFLGYSLVGV, MMEASTIAAILLGSVAGGILA, MAALGVCALVYAIAVIANLFI, LFWGAGVTLRFLLVLWVPVAL, ATPTLLNAMVAIGIVVGAGAA, CLPAGVLIGVMVTIFSLQNSM, LLLIIIGILGGFFVVPLNALL, LGENTAMLFMLGLYSLVVKLG, and VVAVGVGFGVVFALAIALLWG.

Belongs to the major facilitator superfamily. LplT (TC 2.A.1.42) family.

It is found in the cell inner membrane. Its function is as follows. Catalyzes the facilitated diffusion of 2-acyl-glycero-3-phosphoethanolamine (2-acyl-GPE) into the cell. The protein is Lysophospholipid transporter LplT of Yersinia pestis bv. Antiqua (strain Antiqua).